Consider the following 516-residue polypeptide: Protein psiC (516 aa).

The signal sequence occupies residues 1–19; the sequence is MKILILSFFLILGINLVFC. One can recognise a PA14 domain in the interval 109-249; that stretch reads ESKDEPGIYV…YDACGVCLGK (141 aa). Asn134, Asn234, Asn250, Asn284, Asn333, Asn357, and Asn367 each carry an N-linked (GlcNAc...) asparagine glycan. Residues 418 to 427 are compositionally biased toward low complexity; the sequence is DIIIDSSSDI. Positions 418–465 are disordered; the sequence is DIIIDSSSDIPIPTLSPSPQPSRFPTDTPTNTPMPPTRPPTPTEDPKI. Positions 449–460 are enriched in pro residues; the sequence is TPMPPTRPPTPT.

Belongs to the prespore-cell-inducing factor family.

Its subcellular location is the secreted. The polypeptide is Protein psiC (psiC) (Dictyostelium discoideum (Social amoeba)).